Reading from the N-terminus, the 392-residue chain is ATP phosphoribosyltransferase regulatory subunit (392 aa).

Belongs to the class-II aminoacyl-tRNA synthetase family. HisZ subfamily. In terms of assembly, heteromultimer composed of HisG and HisZ subunits.

It is found in the cytoplasm. It participates in amino-acid biosynthesis; L-histidine biosynthesis; L-histidine from 5-phospho-alpha-D-ribose 1-diphosphate: step 1/9. Its function is as follows. Required for the first step of histidine biosynthesis. May allow the feedback regulation of ATP phosphoribosyltransferase activity by histidine. The sequence is that of ATP phosphoribosyltransferase regulatory subunit from Gloeobacter violaceus (strain ATCC 29082 / PCC 7421).